The sequence spans 114 residues: 11.9 kDa wall protein (114 aa).

The propeptide occupies Met1–Arg6.

It localises to the secreted. Its subcellular location is the cell wall. Functionally, may play a role in the structure of the hypha-forming fruit bodies. The sequence is that of 11.9 kDa wall protein (TDF-1) from Tuber dryophilum (Truffle).